The following is a 142-amino-acid chain: Hemoglobin subunit beta (142 aa).

Residues Lys-3–His-142 enclose the Globin domain. Residues His-60 and His-89 each contribute to the heme b site.

This sequence belongs to the globin family. Heterotetramer of two alpha chains and two beta chains. As to expression, red blood cells.

Involved in oxygen transport from gills to the various peripheral tissues. The polypeptide is Hemoglobin subunit beta (HBB) (Hemitrygon akajei (Red stingray)).